Consider the following 329-residue polypeptide: Taste receptor type 2 member 134 (329 aa).

Residues 1 to 27 are Extracellular-facing; the sequence is MRCSLRGCVQGRGGKSGVSLSKFSPKK. Residues 28 to 48 traverse the membrane as a helical segment; it reads MSFFFIFMVIFCIQSLVALLQ. The Cytoplasmic portion of the chain corresponds to 49 to 68; that stretch reads NGFLATVLGREWVRSQGLPA. The chain crosses the membrane as a helical span at residues 69–89; that stretch reads GDMIVACLAASRFCLHGVAIV. At 90–121 the chain is on the extracellular side; the sequence is NNFLTFVKLWSQKIYFSVLWDFVNTVNFWCTT. A helical transmembrane segment spans residues 122 to 142; that stretch reads WLAIFYCVKISSFSHPIFFWI. Over 143–153 the chain is Cytoplasmic; it reads KWRISRSVPRL. Residues 154–174 traverse the membrane as a helical segment; that stretch reads LLGSLVIGGLSAVSSATGNTI. The Extracellular segment spans residues 175 to 201; that stretch reads AFQMTACENYTLAYRTRAFYAYYFRCH. Residue Asn-183 is glycosylated (N-linked (GlcNAc...) asparagine). A helical transmembrane segment spans residues 202–222; that stretch reads AMLMWIIPFFLFLLSVILLMF. The Cytoplasmic segment spans residues 223 to 251; sequence SLYRHLEHMRYRRPWSHDYSTQAHTMALK. A helical membrane pass occupies residues 252 to 272; that stretch reads SLAFFLVFYTSYVLFLVISVT. At 273–282 the chain is on the extracellular side; the sequence is RVVNVHSSWH. Residues 283 to 303 form a helical membrane-spanning segment; sequence WAWEVITYMGILLHSTILTLS. The Cytoplasmic segment spans residues 304 to 329; sequence NPKMRKALKIKFPDLCVARSQDKRRG.

It belongs to the G-protein coupled receptor T2R family. Expressed in tongue and gastrointestinal tract.

It localises to the membrane. Putative taste receptor which may play a role in the perception of bitterness. This Rattus norvegicus (Rat) protein is Taste receptor type 2 member 134.